Reading from the N-terminus, the 571-residue chain is Proline--tRNA ligase (571 aa).

The protein belongs to the class-II aminoacyl-tRNA synthetase family. ProS type 1 subfamily. Homodimer.

The protein localises to the cytoplasm. It carries out the reaction tRNA(Pro) + L-proline + ATP = L-prolyl-tRNA(Pro) + AMP + diphosphate. Its function is as follows. Catalyzes the attachment of proline to tRNA(Pro) in a two-step reaction: proline is first activated by ATP to form Pro-AMP and then transferred to the acceptor end of tRNA(Pro). As ProRS can inadvertently accommodate and process non-cognate amino acids such as alanine and cysteine, to avoid such errors it has two additional distinct editing activities against alanine. One activity is designated as 'pretransfer' editing and involves the tRNA(Pro)-independent hydrolysis of activated Ala-AMP. The other activity is designated 'posttransfer' editing and involves deacylation of mischarged Ala-tRNA(Pro). The misacylated Cys-tRNA(Pro) is not edited by ProRS. The polypeptide is Proline--tRNA ligase (Pseudomonas putida (strain GB-1)).